Consider the following 347-residue polypeptide: tRNA N6-adenosine threonylcarbamoyltransferase (347 aa).

Residues histidine 109 and histidine 113 each contribute to the Fe cation site. Residues 136-140, aspartate 169, glycine 182, aspartate 186, and asparagine 284 contribute to the substrate site; that span reads TVSGG. Aspartate 312 contributes to the Fe cation binding site.

It belongs to the KAE1 / TsaD family. Fe(2+) serves as cofactor.

It localises to the cytoplasm. The catalysed reaction is L-threonylcarbamoyladenylate + adenosine(37) in tRNA = N(6)-L-threonylcarbamoyladenosine(37) in tRNA + AMP + H(+). In terms of biological role, required for the formation of a threonylcarbamoyl group on adenosine at position 37 (t(6)A37) in tRNAs that read codons beginning with adenine. Is involved in the transfer of the threonylcarbamoyl moiety of threonylcarbamoyl-AMP (TC-AMP) to the N6 group of A37, together with TsaE and TsaB. TsaD likely plays a direct catalytic role in this reaction. The sequence is that of tRNA N6-adenosine threonylcarbamoyltransferase from Chlorobium phaeobacteroides (strain BS1).